The chain runs to 494 residues: GTPase Der (494 aa).

EngA-type G domains follow at residues 3–166 (PVVA…AEQM) and 206–379 (IKLA…RSAT). GTP-binding positions include 9–16 (GRPNVGKS), 56–60 (DTGGI), 118–121 (NKVD), 212–219 (GRPNVGKS), 259–263 (DTAGV), and 324–327 (NKWD). A KH-like domain is found at 380-464 (TRVGTSVLTR…PIRIQFQNSE (85 aa)).

It belongs to the TRAFAC class TrmE-Era-EngA-EngB-Septin-like GTPase superfamily. EngA (Der) GTPase family. In terms of assembly, associates with the 50S ribosomal subunit.

GTPase that plays an essential role in the late steps of ribosome biogenesis. In Vibrio cholerae serotype O1 (strain ATCC 39541 / Classical Ogawa 395 / O395), this protein is GTPase Der.